Reading from the N-terminus, the 963-residue chain is Exportin-T (963 aa).

Residue M1 is modified to N-acetylmethionine. Position 635 is an N6-acetyllysine (K635).

The protein belongs to the exportin family. As to quaternary structure, found in a complex with XPOT, Ran and tRNA. Probably found in a complex with nucleoporins. Interacts with Ran and tRNA in a GTP-dependent manner.

It is found in the nucleus. Its subcellular location is the cytoplasm. In terms of biological role, mediates the nuclear export of aminoacylated tRNAs. In the nucleus binds to tRNA and to the GTPase Ran in its active GTP-bound form. Docking of this trimeric complex to the nuclear pore complex (NPC) is mediated through binding to nucleoporins. Upon transit of a nuclear export complex into the cytoplasm, disassembling of the complex and hydrolysis of Ran-GTP to Ran-GDP (induced by RANBP1 and RANGAP1, respectively) cause release of the tRNA from the export receptor. XPOT then return to the nuclear compartment and mediate another round of transport. The directionality of nuclear export is thought to be conferred by an asymmetric distribution of the GTP- and GDP-bound forms of Ran between the cytoplasm and nucleus. In Mus musculus (Mouse), this protein is Exportin-T (Xpot).